The chain runs to 3722 residues: Vitelline envelope sperm lysin receptor (3722 aa).

Residues 1–24 form the signal peptide; that stretch reads MSGMQWSFGFSCLFFLKTVWICQA. The Extracellular portion of the chain corresponds to 25–3698; it reads FDADTPDPRV…TPSTDMATVQ (3674 aa). 2 cysteine pairs are disulfide-bonded: cysteine 43–cysteine 141 and cysteine 72–cysteine 104. The VERL 1 repeat unit spans residues 77-155; the sequence is MQMTRGRGIN…SQASNAPEPK (79 aa). Residues asparagine 115, asparagine 122, and asparagine 142 are each glycosylated (N-linked (GlcNAc...) asparagine). The disordered stretch occupies residues 146-169; it reads SQASNAPEPKASPTSSTPQPEAAS. Residues 157-169 show a composition bias toward polar residues; that stretch reads SPTSSTPQPEAAS. Asparagine 171 carries N-linked (GlcNAc...) asparagine glycosylation. Intrachain disulfides connect cysteine 182–cysteine 280 and cysteine 211–cysteine 243. One copy of the VERL 2 repeat lies at 216–293; it reads VPITHEHGFN…KSPDAPKPES (78 aa). Residue asparagine 254 is glycosylated (N-linked (GlcNAc...) asparagine). Positions 279 to 335 are disordered; it reads QCYMPKSPDAPKPESCLSSPPEPEASPSSNAPEPETYPTSSAPEKVSSDQPAPSHNQ. The span at 291–312 shows a compositional bias: low complexity; the sequence is PESCLSSPPEPEASPSSNAPEP. Over residues 315–335 the composition is skewed to polar residues; the sequence is YPTSSAPEKVSSDQPAPSHNQ. Residues asparagine 334 and asparagine 373 are each glycosylated (N-linked (GlcNAc...) asparagine). 2 disulfides stabilise this stretch: cysteine 345-cysteine 443 and cysteine 374-cysteine 406. The VERL 3 repeat unit spans residues 379–455; sequence VPITQEFGIN…PKSPVAPKPE (77 aa). 36 N-linked (GlcNAc...) asparagine glycosylation sites follow: asparagine 417, asparagine 438, asparagine 487, asparagine 501, asparagine 526, asparagine 570, asparagine 591, asparagine 640, asparagine 654, asparagine 679, asparagine 723, asparagine 744, asparagine 793, asparagine 807, asparagine 832, asparagine 876, asparagine 897, asparagine 946, asparagine 960, asparagine 985, asparagine 1029, asparagine 1050, asparagine 1099, asparagine 1113, asparagine 1138, asparagine 1182, asparagine 1203, asparagine 1252, asparagine 1266, asparagine 1291, asparagine 1335, asparagine 1356, asparagine 1405, asparagine 1419, asparagine 1443, and asparagine 1487. The disordered stretch occupies residues 443–488; it reads CYMPKSPVAPKPETGPTSNAPEPETYPTSSAPEKVSSDQPAPSHNQ. Polar residues predominate over residues 457-488; the sequence is GPTSNAPEPETYPTSSAPEKVSSDQPAPSHNQ. The VERL 4 repeat unit spans residues 532 to 608; the sequence is VPITQEFGIN…PKSPVAPKPE (77 aa). The tract at residues 603 to 641 is disordered; that stretch reads VAPKPETGPTSNAPEPETYPTSSAPEKVSSDQPAPSHNQ. The segment covering 610–641 has biased composition (polar residues); the sequence is GPTSNAPEPETYPTSSAPEKVSSDQPAPSHNQ. Residues 685 to 761 form a VERL 5 repeat; it reads VPITQEFGIN…PKSPVAPKPE (77 aa). Residues 756-794 are disordered; sequence VAPKPETGPSSNAPEPETYPTSSAPEKVSSDQPAPSHNQ. The segment covering 763 to 794 has biased composition (polar residues); the sequence is GPSSNAPEPETYPTSSAPEKVSSDQPAPSHNQ. The VERL 6 repeat unit spans residues 838 to 914; that stretch reads VPITQEFGIN…PKSPVAPKPE (77 aa). The disordered stretch occupies residues 909–947; it reads VAPKPETGPTSNAPEPETYPTSSAPEKVSSDQPAPSHNQ. Over residues 916-947 the composition is skewed to polar residues; the sequence is GPTSNAPEPETYPTSSAPEKVSSDQPAPSHNQ. The VERL 7 repeat unit spans residues 991 to 1067; that stretch reads VPITHEFGIN…PKSPVAPKPE (77 aa). The tract at residues 1062 to 1100 is disordered; sequence VAPKPETGPTSNAPEPETYPTSSAPEKVSSDQPAPSHNQ. Polar residues predominate over residues 1069 to 1100; that stretch reads GPTSNAPEPETYPTSSAPEKVSSDQPAPSHNQ. The stretch at 1144-1220 is one VERL 8 repeat; the sequence is VPITQEFGIN…PKSPVAPKPE (77 aa). Positions 1215–1253 are disordered; sequence VAPKPETGPTSNAPEPETYPTSSAPEKVSSDQPAPSHNQ. Positions 1222–1253 are enriched in polar residues; it reads GPTSNAPEPETYPTSSAPEKVSSDQPAPSHNQ. Residues 1297-1373 form a VERL 9 repeat; sequence VPITHKFGIN…PKSPVAHKPE (77 aa). A disordered region spans residues 1368–1406; it reads VAHKPETGPTSNAPEPETYPTSSAPEKVSSDQPAPSHNQ. The segment covering 1375–1406 has biased composition (polar residues); that stretch reads GPTSNAPEPETYPTSSAPEKVSSDQPAPSHNQ. A VERL 10 repeat occupies 1449-1525; that stretch reads VPITHEFGIN…PKSPVAPKPE (77 aa). The interval 1519–1556 is disordered; sequence PVAPKPETGPSSNAPEPETYPTSSAPEKVYSDQPAPSH. Positions 1527 to 1543 are enriched in polar residues; the sequence is GPSSNAPEPETYPTSSA. N-linked (GlcNAc...) asparagine glycans are attached at residues asparagine 1557, asparagine 1571, asparagine 1596, asparagine 1640, asparagine 1661, asparagine 1710, asparagine 1724, asparagine 1749, asparagine 1793, asparagine 1814, asparagine 1863, asparagine 1877, asparagine 1902, asparagine 1946, asparagine 1967, asparagine 2016, asparagine 2030, asparagine 2055, asparagine 2099, asparagine 2120, asparagine 2169, asparagine 2183, asparagine 2208, asparagine 2252, asparagine 2273, asparagine 2322, asparagine 2336, asparagine 2361, asparagine 2405, asparagine 2426, asparagine 2475, asparagine 2489, asparagine 2514, asparagine 2558, asparagine 2579, asparagine 2628, asparagine 2642, asparagine 2667, asparagine 2711, asparagine 2732, asparagine 2781, asparagine 2795, asparagine 2820, asparagine 2864, asparagine 2885, asparagine 2934, asparagine 2948, asparagine 2973, asparagine 3017, asparagine 3038, asparagine 3087, asparagine 3101, asparagine 3126, asparagine 3170, asparagine 3191, asparagine 3229, asparagine 3243, asparagine 3268, asparagine 3312, and asparagine 3333. The VERL 11 repeat unit spans residues 1602–1678; that stretch reads VPITHEFGIN…PKSPVAPKPE (77 aa). Positions 1672-1711 are disordered; it reads PVAPKPETGPTSNAPEPQTYPTSSAPEKVSSDQPAPSHNQ. Polar residues predominate over residues 1680–1711; sequence GPTSNAPEPQTYPTSSAPEKVSSDQPAPSHNQ. A VERL 12 repeat occupies 1755 to 1831; sequence VPITQEFGIN…PKSPVAPKPE (77 aa). Positions 1826–1864 are disordered; sequence VAPKPETGPTSNAPEPETYPTSSAPEKVSSDQPAPSHNQ. Positions 1833-1864 are enriched in polar residues; it reads GPTSNAPEPETYPTSSAPEKVSSDQPAPSHNQ. The VERL 13 repeat unit spans residues 1908–1984; it reads VPITHEFGIN…PKSPVAPKPE (77 aa). Residues 1979–2017 form a disordered region; the sequence is VAPKPETGPTSNAPEPETYPTSSAPEKVSSDQPAPSHNQ. The segment covering 1986 to 2017 has biased composition (polar residues); that stretch reads GPTSNAPEPETYPTSSAPEKVSSDQPAPSHNQ. Residues 2061–2137 form a VERL 14 repeat; sequence VPITQEFGIN…PKSPVAPKPE (77 aa). The tract at residues 2132 to 2170 is disordered; it reads VAPKPETGPTSNAPEPETYPTSSAPEKVSSDQPAPSHNQ. Positions 2139-2170 are enriched in polar residues; sequence GPTSNAPEPETYPTSSAPEKVSSDQPAPSHNQ. The VERL 15 repeat unit spans residues 2214–2290; the sequence is VPITQEFGIN…PKSPVAPKPE (77 aa). The disordered stretch occupies residues 2285–2323; that stretch reads VAPKPETGPTSNAPEPETYPTSSAPEKVSSDQPAPSHNQ. The segment covering 2292–2323 has biased composition (polar residues); the sequence is GPTSNAPEPETYPTSSAPEKVSSDQPAPSHNQ. A VERL 16 repeat occupies 2367 to 2443; it reads VPITQEFGIN…PKSPVAPKPE (77 aa). The interval 2438-2476 is disordered; the sequence is VAPKPETGPTSNAPEPETYPTSSAPEKVSSDQPAPSHNQ. A compositionally biased stretch (polar residues) spans 2445-2476; it reads GPTSNAPEPETYPTSSAPEKVSSDQPAPSHNQ. The VERL 17 repeat unit spans residues 2520 to 2596; it reads VPITQEFGIN…PKSPVAPKPE (77 aa). The interval 2590 to 2629 is disordered; that stretch reads PVAPKPETGPTSNAPEPQTYPTSSAPEKVSSDQPAPSHNQ. The segment covering 2598–2629 has biased composition (polar residues); that stretch reads GPTSNAPEPQTYPTSSAPEKVSSDQPAPSHNQ. Residues 2673 to 2749 form a VERL 18 repeat; the sequence is VPITQEFGIN…PKSPVAPKPE (77 aa). The disordered stretch occupies residues 2744–2782; sequence VAPKPETGPTSNAPEPETYPTSSAPEKVSSDQPAPSHNQ. A compositionally biased stretch (polar residues) spans 2751-2782; the sequence is GPTSNAPEPETYPTSSAPEKVSSDQPAPSHNQ. One copy of the VERL 19 repeat lies at 2826–2902; it reads VPITHEFGIN…PKSPVAPKPE (77 aa). Positions 2897 to 2935 are disordered; it reads VAPKPETGPTSNAPEPQTYPTSSAPEKVSSDQPAPSHNQ. Positions 2904-2935 are enriched in polar residues; it reads GPTSNAPEPQTYPTSSAPEKVSSDQPAPSHNQ. One copy of the VERL 20 repeat lies at 2979–3055; sequence VPITQEFGIN…PKSPVAPKPE (77 aa). Positions 3050 to 3088 are disordered; it reads VAPKPETGPTSNAPEPETYPTSSAPEKVSSDQPAPSHNQ. Residues 3057 to 3088 are compositionally biased toward polar residues; the sequence is GPTSNAPEPETYPTSSAPEKVSSDQPAPSHNQ. The VERL 21 repeat unit spans residues 3132 to 3208; that stretch reads VPITQEFGIN…PKSPVAPKPE (77 aa). Residues 3205–3230 form a disordered region; the sequence is PKPETYPTSSAPEKVSSDQPAPSHNQ. A compositionally biased stretch (polar residues) spans 3210–3230; the sequence is YPTSSAPEKVSSDQPAPSHNQ. The VERL 22 repeat unit spans residues 3274 to 3351; sequence VPITHEFGIN…KSPVAPKPEA (78 aa). Residues 3345-3407 are disordered; it reads VAPKPEASPT…RKSNQTTSTE (63 aa). Residues 3352-3375 show a composition bias toward polar residues; the sequence is SPTSNAPEPQTYPTSSAPGTSPEG. Residues asparagine 3388, asparagine 3401, asparagine 3449, asparagine 3456, asparagine 3559, and asparagine 3650 are each glycosylated (N-linked (GlcNAc...) asparagine). The region spanning 3408-3670 is the ZP domain; the sequence is DVLDDTSNYI…SSCSNQRRTR (263 aa). Residues 3699-3719 traverse the membrane as a helical segment; sequence VALLVAVALLITQLAGLAIYV. The Cytoplasmic portion of the chain corresponds to 3720–3722; it reads NIN.

May form disulfide-linked homodimers. Interacts (via VERL repeats) with sperm lysin. Each VERL chain can bind numerous lysin molecules. In terms of processing, N-glycosylated. About half of the glycoprotein mass corresponds to carbohydrate chains. N-glycosylation is not required for lysin binding. O-glycosylated. O-glycosylation is not required for lysin binding.

Its subcellular location is the cell membrane. It localises to the secreted. The protein resides in the extracellular space. The protein localises to the extracellular matrix. Functionally, structural component of the egg vitelline envelope; forms long filaments. Functions as a species-specific receptor for the sperm protein lysin; prevents fertilization by sperm from other species. Each VERL chain can bind multiple copies of the sperm protein lysin; this creates a 3 um hole in the egg vitelline envelope through which the sperm passes. The chain is Vitelline envelope sperm lysin receptor from Haliotis rufescens (California red abalone).